The chain runs to 132 residues: Small ribosomal subunit protein uS8 (132 aa).

It belongs to the universal ribosomal protein uS8 family. As to quaternary structure, part of the 30S ribosomal subunit. Contacts proteins S5 and S12.

Its function is as follows. One of the primary rRNA binding proteins, it binds directly to 16S rRNA central domain where it helps coordinate assembly of the platform of the 30S subunit. The chain is Small ribosomal subunit protein uS8 from Staphylococcus epidermidis (strain ATCC 35984 / DSM 28319 / BCRC 17069 / CCUG 31568 / BM 3577 / RP62A).